The primary structure comprises 167 residues: Phosphorelay intermediate protein YPD1 (167 aa).

One can recognise an HPt domain in the interval 24-129; that stretch reads DSDFSKGLII…DDEEIKIQVD (106 aa). Residue His64 is modified to Phosphohistidine.

Belongs to the YPD1 family. As to quaternary structure, interacts with the response regulatory domains of SLN1 and SSK1. The phosphorelay mechanism involves the sequential transfer of a phosphate group from 'His-576' (H1) to 'Asp-1144' (D1) of SLN1, then to His-64 (H2) of YPD1 and finally to 'Asp-554' (D2) of SSK1 or 'Asp-427' (D2) of SKN7.

The protein resides in the cytoplasm. It is found in the nucleus. Functionally, phosphorelay intermediate protein that is part of the branched SLN1-YPD1-SKN7/SSK1 two-component regulatory system, which controls activity of the HOG1 pathway and gene expression in response to changes in the osmolarity of the extracellular environment. Catalyzes the phosphoryl group transfer from the membrane-bound osmosensing histidine kinase SLN1 to two distinct response regulator proteins, SSK1 in the cytoplasm, and transcription factor SKN7 in the nucleus. The sequence is that of Phosphorelay intermediate protein YPD1 (YPD1) from Saccharomyces cerevisiae (strain ATCC 204508 / S288c) (Baker's yeast).